Reading from the N-terminus, the 186-residue chain is Auxin-responsive protein IAA4 (186 aa).

Residues 18–22 carry the EAR-like (transcriptional repression) motif; it reads LRLGL. Positions 25–62 are disordered; it reads TEETVSCGKSNKRVLPEATEKEIESTGKTETASPPKAQ. Positions 38–51 are enriched in basic and acidic residues; that stretch reads VLPEATEKEIESTG. Residues 88–175 form the PB1 domain; sequence GNYVKVSMDG…SCKRLRIMKG (88 aa).

This sequence belongs to the Aux/IAA family. In terms of assembly, homodimers and heterodimers. Interacts with TPL. In terms of tissue distribution, preferentially expressed in stems, leaves and flowers.

It localises to the nucleus. Its function is as follows. Aux/IAA proteins are short-lived transcriptional factors that function as repressors of early auxin response genes at low auxin concentrations. Repression is thought to result from the interaction with auxin response factors (ARFs), proteins that bind to the auxin-responsive promoter element (AuxRE). Formation of heterodimers with ARF proteins may alter their ability to modulate early auxin response genes expression. This Arabidopsis thaliana (Mouse-ear cress) protein is Auxin-responsive protein IAA4 (IAA4).